A 471-amino-acid polypeptide reads, in one-letter code: Siroheme synthase (471 aa).

The segment at 1 to 203 (MDYLPLFADI…GDWESAEKTL (203 aa)) is precorrin-2 dehydrogenase /sirohydrochlorin ferrochelatase. Residues 22-23 (EV) and 43-44 (KN) each bind NAD(+). Residue serine 128 is modified to Phosphoserine. A uroporphyrinogen-III C-methyltransferase region spans residues 215–471 (GEIILVGAGP…DTKSSLINLA (257 aa)). Proline 224 is a binding site for S-adenosyl-L-methionine. Aspartate 247 functions as the Proton acceptor in the catalytic mechanism. The Proton donor role is filled by lysine 269. S-adenosyl-L-methionine is bound by residues 300–302 (GGD), isoleucine 305, 330–331 (TA), methionine 382, and alanine 411.

It in the N-terminal section; belongs to the precorrin-2 dehydrogenase / sirohydrochlorin ferrochelatase family. This sequence in the C-terminal section; belongs to the precorrin methyltransferase family.

It catalyses the reaction uroporphyrinogen III + 2 S-adenosyl-L-methionine = precorrin-2 + 2 S-adenosyl-L-homocysteine + H(+). The enzyme catalyses precorrin-2 + NAD(+) = sirohydrochlorin + NADH + 2 H(+). The catalysed reaction is siroheme + 2 H(+) = sirohydrochlorin + Fe(2+). Its pathway is cofactor biosynthesis; adenosylcobalamin biosynthesis; precorrin-2 from uroporphyrinogen III: step 1/1. It participates in cofactor biosynthesis; adenosylcobalamin biosynthesis; sirohydrochlorin from precorrin-2: step 1/1. It functions in the pathway porphyrin-containing compound metabolism; siroheme biosynthesis; precorrin-2 from uroporphyrinogen III: step 1/1. The protein operates within porphyrin-containing compound metabolism; siroheme biosynthesis; siroheme from sirohydrochlorin: step 1/1. Its pathway is porphyrin-containing compound metabolism; siroheme biosynthesis; sirohydrochlorin from precorrin-2: step 1/1. Multifunctional enzyme that catalyzes the SAM-dependent methylations of uroporphyrinogen III at position C-2 and C-7 to form precorrin-2 via precorrin-1. Then it catalyzes the NAD-dependent ring dehydrogenation of precorrin-2 to yield sirohydrochlorin. Finally, it catalyzes the ferrochelation of sirohydrochlorin to yield siroheme. In Zymomonas mobilis subsp. mobilis (strain ATCC 31821 / ZM4 / CP4), this protein is Siroheme synthase.